Reading from the N-terminus, the 567-residue chain is TGF-beta receptor type-2 (567 aa).

The N-terminal stretch at 1–23 (MGRGLLRGLWPLHIVLWTRIAST) is a signal peptide. At 24-166 (IPPHVPKSVN…SPDLLLVIIQ (143 aa)) the chain is on the extracellular side. 6 disulfide bridges follow: Cys51–Cys84, Cys54–Cys71, Cys61–Cys67, Cys77–Cys101, Cys121–Cys136, and Cys138–Cys143. N-linked (GlcNAc...) asparagine glycans are attached at residues Asn70 and Asn94. The helical transmembrane segment at 167 to 187 (VTGVSLLPPLGIAIAVIIIFY) threads the bilayer. Over 188 to 567 (CYRVHRQQKL…PEDGSLNTTK (380 aa)) the chain is Cytoplasmic. The Protein kinase domain occupies 244–546 (IELDTLVGKG…RFSELEHPER (303 aa)). ATP contacts are provided by residues 250-258 (VGKGRFAEV) and Lys277. The Proton acceptor role is filled by Asp379. Residues Ser409, Ser548, and Ser553 each carry the phosphoserine modification. A disordered region spans residues 545 to 567 (ERLSGRSCSQEKIPEDGSLNTTK).

The protein belongs to the protein kinase superfamily. TKL Ser/Thr protein kinase family. TGFB receptor subfamily. As to quaternary structure, homodimer. Heterohexamer; TGFB1, TGFB2 and TGFB3 homodimeric ligands assemble a functional receptor composed of two TGFBR1 and TGFBR2 heterodimers to form a ligand-receptor heterohexamer. The respective affinity of TGFRB1 and TGFRB2 for the ligands may modulate the kinetics of assembly of the receptor and may explain the different biological activities of TGFB1, TGFB2 and TGFB3. Component of a complex composed of TSC22D1 (via N-terminus), TGFBR1 and TGFBR2; the interaction between TSC22D1 and TGFBR1 is inhibited by SMAD7 and promoted by TGFB1. Interacts with DAXX. Interacts with DYNLT4. Interacts with ZFYVE9; ZFYVE9 recruits SMAD2 and SMAD3 to the TGF-beta receptor. Interacts with and is activated by SCUBE3; this interaction does not affect TGFB1-binding to TGFBR2. Interacts with VPS39; this interaction is independent of the receptor kinase activity and of the presence of TGF-beta. Interacts with CLU. The cofactor is Mg(2+). Mn(2+) serves as cofactor. Phosphorylated on a Ser/Thr residue in the cytoplasmic domain. Widely expressed in adult. Expressed primarily in mesenchyme and epidermis of the midgestational fetus.

The protein localises to the cell membrane. It is found in the membrane raft. The enzyme catalyses L-threonyl-[receptor-protein] + ATP = O-phospho-L-threonyl-[receptor-protein] + ADP + H(+). It carries out the reaction L-seryl-[receptor-protein] + ATP = O-phospho-L-seryl-[receptor-protein] + ADP + H(+). In terms of biological role, transmembrane serine/threonine kinase forming with the TGF-beta type I serine/threonine kinase receptor, TGFBR1, the non-promiscuous receptor for the TGF-beta cytokines TGFB1, TGFB2 and TGFB3. Transduces the TGFB1, TGFB2 and TGFB3 signal from the cell surface to the cytoplasm and is thus regulating a plethora of physiological and pathological processes including cell cycle arrest in epithelial and hematopoietic cells, control of mesenchymal cell proliferation and differentiation, wound healing, extracellular matrix production, immunosuppression and carcinogenesis. The formation of the receptor complex composed of 2 TGFBR1 and 2 TGFBR2 molecules symmetrically bound to the cytokine dimer results in the phosphorylation and the activation of TGFRB1 by the constitutively active TGFBR2. Activated TGFBR1 phosphorylates SMAD2 which dissociates from the receptor and interacts with SMAD4. The SMAD2-SMAD4 complex is subsequently translocated to the nucleus where it modulates the transcription of the TGF-beta-regulated genes. This constitutes the canonical SMAD-dependent TGF-beta signaling cascade. Also involved in non-canonical, SMAD-independent TGF-beta signaling pathways. Functionally, has transforming growth factor beta-activated receptor activity. In Mus musculus (Mouse), this protein is TGF-beta receptor type-2 (Tgfbr2).